A 350-amino-acid polypeptide reads, in one-letter code: DNA primase small subunit PriS (350 aa).

Residues D97, D99, and D251 contribute to the active site.

This sequence belongs to the eukaryotic-type primase small subunit family. As to quaternary structure, heterodimer of a small subunit (PriS) and a large subunit (PriL). It depends on Mg(2+) as a cofactor. The cofactor is Mn(2+). Requires Zn(2+) as cofactor.

Its function is as follows. Catalytic subunit of DNA primase, an RNA polymerase that catalyzes the synthesis of short RNA molecules used as primers for DNA polymerase during DNA replication. The small subunit contains the primase catalytic core and has DNA synthesis activity on its own. Binding to the large subunit stabilizes and modulates the activity, increasing the rate of DNA synthesis while decreasing the length of the DNA fragments, and conferring RNA synthesis capability. The DNA polymerase activity may enable DNA primase to also catalyze primer extension after primer synthesis. May also play a role in DNA repair. The protein is DNA primase small subunit PriS of Methanocaldococcus jannaschii (strain ATCC 43067 / DSM 2661 / JAL-1 / JCM 10045 / NBRC 100440) (Methanococcus jannaschii).